The sequence spans 144 residues: Austinoid biosynthesis cluster protein S (144 aa).

Belongs to the trt14 isomerase family. In terms of assembly, homodimer.

It participates in secondary metabolite biosynthesis; terpenoid biosynthesis. In terms of biological role, part of the gene cluster that mediates the biosynthesis of calidodehydroaustin, a fungal meroterpenoid. The first step of the pathway is the synthesis of 3,5-dimethylorsellinic acid by the polyketide synthase ausA. 3,5-dimethylorsellinic acid is then prenylated by the polyprenyl transferase ausN. Further epoxidation by the FAD-dependent monooxygenase ausM and cyclization by the probable terpene cyclase ausL lead to the formation of protoaustinoid A. Protoaustinoid A is then oxidized to spiro-lactone preaustinoid A3 by the combined action of the FAD-binding monooxygenases ausB and ausC, and the dioxygenase ausE. Acid-catalyzed keto-rearrangement and ring contraction of the tetraketide portion of preaustinoid A3 by ausJ lead to the formation of preaustinoid A4. The aldo-keto reductase ausK, with the help of ausH, is involved in the next step by transforming preaustinoid A4 into isoaustinone which is in turn hydroxylated by the P450 monooxygenase ausI to form austinolide. The cytochrome P450 monooxygenase ausG modifies austinolide to austinol. Austinol is further acetylated to austin by the O-acetyltransferase ausP, which spontaneously changes to dehydroaustin. The cytochrome P450 monooxygenase ausR then converts dehydroaustin is into 7-dehydrodehydroaustin. The hydroxylation catalyzed by ausR permits the O-acetyltransferase ausQ to add an additional acetyl group to the molecule, leading to the formation of acetoxydehydroaustin. The short chain dehydrogenase ausT catalyzes the reduction of the double bond present between carbon atoms 1 and 2 to convert 7-dehydrodehydroaustin into 1,2-dihydro-7-hydroxydehydroaustin. AusQ catalyzes not only an acetylation reaction but also the addition of the PKS ausV diketide product to 1,2-dihydro-7-hydroxydehydroaustin, forming precalidodehydroaustin. Finally, the iron/alpha-ketoglutarate-dependent dioxygenase converts precalidodehydroaustin into calidodehydroaustin. AusS is necessary for austinoids production and may play a possible function as a regulator. Functionally, may play a possible function as a regulator. This Aspergillus calidoustus protein is Austinoid biosynthesis cluster protein S.